Consider the following 299-residue polypeptide: DNA-binding transcriptional repressor CapW (299 aa).

The disordered stretch occupies residues 1 to 22 (MTDESKPTDDQPTSKGRQGARW). Residues 1-95 (MTDESKPTDD…SFKAVFPSSA (95 aa)) form a winged HTH domain region. The tract at residues 96–207 (VERYLDDLLR…LTRIKCCKYV (112 aa)) is WYL domain. Residues 131 to 211 (GRRLNADIVG…KCCKYVGQDR (81 aa)) enclose the WYL domain. Residues 156–200 (YQSLTDPEGGERMLSPHALVHDGNRWHVRAYCHKRKAFRDFSLTR) are probable ligand-binding region. The tract at residues 208 to 299 (GQDRDRADED…RDEIKDLIQY (92 aa)) is WCX domain.

As to quaternary structure, homodimer.

Functionally, transcriptional regulator of a CBASS antivirus system. CBASS (cyclic oligonucleotide-based antiphage signaling system) provides immunity against bacteriophage. The CD-NTase protein synthesizes cyclic nucleotides in response to infection; these serve as specific second messenger signals. The signals activate a diverse range of effectors, leading to bacterial cell death and thus abortive phage infection. A type III CBASS system, part of a Cap17-CapW-CdnC-Cap7-Cap6-Cap18 locus. Binds specifically to palindromes that overlap the -10 site in the promoter of cdnC, found between the genes for divergently transcribed capW and cdnC (cognate DNA). Probably represses transcription bidirectionally from the promoter. The sequence is that of DNA-binding transcriptional repressor CapW from Pseudomonas aeruginosa.